A 260-amino-acid polypeptide reads, in one-letter code: LOB domain-containing protein 6 (260 aa).

Positions 32-133 (SPCAACKFLR…QDLARAKYEL (102 aa)) constitute an LOB domain.

It belongs to the LOB domain-containing protein family. Interacts with RS2. Expressed in leaves, leaf primordia, immature ears, immature tassels, whole ovules, silk and husk leaves. Found on the adaxial side of organs.

It localises to the nucleus. In terms of biological role, promotes the switch from proliferation to differentiation in the embryo sac. Negative regulator of cell proliferation in the adaxial side of leaves. Regulates the formation of a symmetric lamina and the establishment of venation. Interacts directly with RS2 (rough sheath 2) to repress some knox homeobox genes. The chain is LOB domain-containing protein 6 (LBD6) from Zea mays (Maize).